The following is a 360-amino-acid chain: D-alanine--D-alanine ligase (360 aa).

Residues K134–Q343 form the ATP-grasp domain. A169 to E224 serves as a coordination point for ATP. Mg(2+) contacts are provided by D297, E310, and N312.

The protein belongs to the D-alanine--D-alanine ligase family. Mg(2+) is required as a cofactor. It depends on Mn(2+) as a cofactor.

It is found in the cytoplasm. The catalysed reaction is 2 D-alanine + ATP = D-alanyl-D-alanine + ADP + phosphate + H(+). It functions in the pathway cell wall biogenesis; peptidoglycan biosynthesis. Functionally, cell wall formation. This chain is D-alanine--D-alanine ligase, found in Lactobacillus acidophilus (strain ATCC 700396 / NCK56 / N2 / NCFM).